We begin with the raw amino-acid sequence, 146 residues long: Ribonuclease H (146 aa).

In terms of domain architecture, RNase H type-1 spans 1–141 (MKKVQLITDG…CDELATRAAR (141 aa)). Positions 9, 47, 69, and 133 each coordinate Mg(2+).

It belongs to the RNase H family. As to quaternary structure, monomer. Requires Mg(2+) as cofactor.

The protein localises to the cytoplasm. It catalyses the reaction Endonucleolytic cleavage to 5'-phosphomonoester.. Its function is as follows. Endonuclease that specifically degrades the RNA of RNA-DNA hybrids. The sequence is that of Ribonuclease H from Solibacter usitatus (strain Ellin6076).